A 199-amino-acid polypeptide reads, in one-letter code: Putative pseudouridine methyltransferase (199 aa).

Leu132 and Cys186 together coordinate S-adenosyl-L-methionine.

Belongs to the methyltransferase superfamily. TrmY family.

It localises to the cytoplasm. This Vibrio campbellii (strain ATCC BAA-1116) protein is Putative pseudouridine methyltransferase.